We begin with the raw amino-acid sequence, 184 residues long: Ribosome-recycling factor (184 aa).

Belongs to the RRF family.

It localises to the cytoplasm. Responsible for the release of ribosomes from messenger RNA at the termination of protein biosynthesis. May increase the efficiency of translation by recycling ribosomes from one round of translation to another. This Cutibacterium acnes (strain DSM 16379 / KPA171202) (Propionibacterium acnes) protein is Ribosome-recycling factor.